Reading from the N-terminus, the 701-residue chain is Peptide transporter 3 (701 aa).

A run of 9 helical transmembrane segments spans residues 29-49 (FSFY…HEFS), 55-75 (FIYH…SIMA), 91-111 (IYVV…SYPI), 119-139 (GLFV…AFAA), 154-174 (FSFF…ITPI), 188-208 (FPLA…LFLM), 269-289 (GLLN…LFDQ), 318-338 (INPV…YPAL), and 351-371 (AVGG…QLKV). Asn-391 and Asn-432 each carry an N-linked (GlcNAc...) asparagine glycan. A run of 3 helical transmembrane segments spans residues 575–595 (ILWS…LSVT), 611–631 (VLTA…MMIS), and 641–661 (LEFF…ILLA).

Belongs to the major facilitator superfamily. Proton-dependent oligopeptide transporter (POT/PTR) (TC 2.A.17) family. As to expression, expressed in the AVA interneuron.

The protein resides in the membrane. Neuron-specific, H(+)-coupled oligopeptide transporter with broad specificity towards di- and tripeptides in a Na(+) and Cl(-)-independent manner. Shows H(+) channel activity in the absence of peptide substrates. The sequence is that of Peptide transporter 3 (pept-3) from Caenorhabditis elegans.